The chain runs to 384 residues: Lipid-A-disaccharide synthase (384 aa).

The protein belongs to the LpxB family.

The enzyme catalyses a lipid X + a UDP-2-N,3-O-bis[(3R)-3-hydroxyacyl]-alpha-D-glucosamine = a lipid A disaccharide + UDP + H(+). Its pathway is bacterial outer membrane biogenesis; LPS lipid A biosynthesis. Functionally, condensation of UDP-2,3-diacylglucosamine and 2,3-diacylglucosamine-1-phosphate to form lipid A disaccharide, a precursor of lipid A, a phosphorylated glycolipid that anchors the lipopolysaccharide to the outer membrane of the cell. This Geobacter sulfurreducens (strain ATCC 51573 / DSM 12127 / PCA) protein is Lipid-A-disaccharide synthase.